Consider the following 331-residue polypeptide: Zinc finger CW-type PWWP domain protein 2 homolog (331 aa).

Residues 9–64 form a CW-type zinc finger; the sequence is EFVHRTWVQCENESCLKWRLLSPAAAAAVNPSEPWYCFMNTDPSYSSCSVSEEDFP. Zn(2+)-binding residues include Cys-18, Cys-23, Cys-45, and Cys-56. The PWWP domain maps to 83-147; that stretch reads LGSLVLVKLR…AAFVGHFSLT (65 aa). The interval 264 to 295 is disordered; the sequence is IQEPTAREDESQGEQLSQCSPESPTGSPFQSY. Residues 276–293 are compositionally biased toward polar residues; it reads GEQLSQCSPESPTGSPFQ.

Functionally, histone methylation reader which binds to non-methylated (H3K4me0), monomethylated (H3K4me1), dimethylated (H3K4me2) and trimethylated (H3K4me3) 'Lys-4' on histone H3. The order of binding preference is H3K4me3 &gt; H3K4me2 &gt; H3K4me1 &gt; H3K4me0. The sequence is that of Zinc finger CW-type PWWP domain protein 2 homolog (Zcwpw2) from Mus musculus (Mouse).